Here is a 142-residue protein sequence, read N- to C-terminus: Secreted acidic protein 1B (142 aa).

2 stretches are compositionally biased toward acidic residues: residues 1-47 and 54-64; these read SDDE…DDNE and TNDDVDYGDGN. A disordered region spans residues 1 to 74; it reads SDDESGDDEN…DEAREIGDHS (74 aa). The Extracellular segment spans residues 1–123; it reads SDDESGDDEN…YLRSGGSHFK (123 aa). Basic and acidic residues predominate over residues 65 to 74; sequence DEAREIGDHS. A helical transmembrane segment spans residues 124–141; it reads GQLLNITLGLGFCILFLL. A topological domain (cytoplasmic) is located at residue Leu-142.

Component of the acid-insoluble and acid-soluble organic matrix of the aragonitic skeleton (at protein level).

Its subcellular location is the membrane. The chain is Secreted acidic protein 1B from Acropora millepora (Staghorn coral).